The chain runs to 220 residues: Probable nicotinate-nucleotide adenylyltransferase (220 aa).

Belongs to the NadD family.

The enzyme catalyses nicotinate beta-D-ribonucleotide + ATP + H(+) = deamido-NAD(+) + diphosphate. The protein operates within cofactor biosynthesis; NAD(+) biosynthesis; deamido-NAD(+) from nicotinate D-ribonucleotide: step 1/1. In terms of biological role, catalyzes the reversible adenylation of nicotinate mononucleotide (NaMN) to nicotinic acid adenine dinucleotide (NaAD). In Saccharophagus degradans (strain 2-40 / ATCC 43961 / DSM 17024), this protein is Probable nicotinate-nucleotide adenylyltransferase.